A 282-amino-acid chain; its full sequence is 2-dehydro-3-deoxyphosphooctonate aldolase (282 aa).

It belongs to the KdsA family.

The protein localises to the cytoplasm. It catalyses the reaction D-arabinose 5-phosphate + phosphoenolpyruvate + H2O = 3-deoxy-alpha-D-manno-2-octulosonate-8-phosphate + phosphate. It participates in carbohydrate biosynthesis; 3-deoxy-D-manno-octulosonate biosynthesis; 3-deoxy-D-manno-octulosonate from D-ribulose 5-phosphate: step 2/3. It functions in the pathway bacterial outer membrane biogenesis; lipopolysaccharide biosynthesis. The sequence is that of 2-dehydro-3-deoxyphosphooctonate aldolase from Shewanella sp. (strain MR-4).